The primary structure comprises 96 residues: NADH-ubiquinone oxidoreductase chain 4L (96 aa).

3 consecutive transmembrane segments (helical) span residues 1–21 (MPTT…SLQR), 27–47 (LLLT…LWAL), and 57–77 (APLI…SLMI).

It belongs to the complex I subunit 4L family.

The protein resides in the mitochondrion membrane. The catalysed reaction is a ubiquinone + NADH + 5 H(+)(in) = a ubiquinol + NAD(+) + 4 H(+)(out). Functionally, core subunit of the mitochondrial membrane respiratory chain NADH dehydrogenase (Complex I) which catalyzes electron transfer from NADH through the respiratory chain, using ubiquinone as an electron acceptor. Part of the enzyme membrane arm which is embedded in the lipid bilayer and involved in proton translocation. This Petromyzon marinus (Sea lamprey) protein is NADH-ubiquinone oxidoreductase chain 4L (MT-ND4L).